The chain runs to 96 residues: DNA-binding protein HmvA (96 aa).

The tract at residues 52–55 is interaction with DNA; the sequence is KTIK.

This sequence belongs to the archaeal histone HMF family. In terms of assembly, homodimer. Dimers then assemble into higher oligomers, with the DNA wrapped around the protein core.

The protein localises to the cytoplasm. The protein resides in the chromosome. In terms of biological role, binds and compact DNA (95 to 150 base pairs) to form nucleosome-like structures that contain positive DNA supercoils. Increases the resistance of DNA to thermal denaturation (in vitro). The chain is DNA-binding protein HmvA (hmvA) from Methanocaldococcus jannaschii (strain ATCC 43067 / DSM 2661 / JAL-1 / JCM 10045 / NBRC 100440) (Methanococcus jannaschii).